The chain runs to 868 residues: Protein NIP100 (868 aa).

The CAP-Gly domain maps to 34–84 (GETQFAKGIWYGIELDKPLGKNDGSANGIRYFDIDLKKANSNGGYYGLFCK). Coiled-coil stretches lie at residues 101–175 (LNGN…HLDN), 207–375 (LDQT…QEEL), and 645–776 (SLLS…QIKE).

In terms of assembly, component of the dynactin complex composed of at least ARP1, JNM1, NIP100 and ARP10. Dynactin comprises a short rod of the ARP1 filament attached to ARP10 at its pointed-end and probably associated with the capping protein at its barbed-end. The rod is implicated in dynein cargo binding. A sidearm formed by NIP100 projects from the ARP1 filament and is implicated in motor binding.

The protein localises to the cytoplasm. Its subcellular location is the cytoskeleton. It localises to the spindle pole. Motor-binding component of the dynactin complex which assists cytoplasmic dynein by increasing its processivity and by regulation of its cargo binding. The dynactin complex is required for the spindle translocation late in anaphase and is involved in a cell wall synthesis checkpoint. This is Protein NIP100 (NIP100) from Saccharomyces cerevisiae (strain ATCC 204508 / S288c) (Baker's yeast).